A 103-amino-acid chain; its full sequence is Small ribosomal subunit protein uS10 (103 aa).

It belongs to the universal ribosomal protein uS10 family. In terms of assembly, part of the 30S ribosomal subunit.

Functionally, involved in the binding of tRNA to the ribosomes. The chain is Small ribosomal subunit protein uS10 from Hydrogenovibrio crunogenus (strain DSM 25203 / XCL-2) (Thiomicrospira crunogena).